Consider the following 293-residue polypeptide: Elongation factor Ts (293 aa).

The tract at residues 81-84 (TDFV) is involved in Mg(2+) ion dislocation from EF-Tu.

It belongs to the EF-Ts family.

It localises to the cytoplasm. Functionally, associates with the EF-Tu.GDP complex and induces the exchange of GDP to GTP. It remains bound to the aminoacyl-tRNA.EF-Tu.GTP complex up to the GTP hydrolysis stage on the ribosome. The chain is Elongation factor Ts from Methylococcus capsulatus (strain ATCC 33009 / NCIMB 11132 / Bath).